The chain runs to 209 residues: Large ribosomal subunit protein uL3 (209 aa).

Residues 128 to 166 form a disordered region; sequence FGGGSRTHGQSDRLRAPGSVGGSSDPSRTFKGTRMAGRM.

It belongs to the universal ribosomal protein uL3 family. As to quaternary structure, part of the 50S ribosomal subunit. Forms a cluster with proteins L14 and L19.

Its function is as follows. One of the primary rRNA binding proteins, it binds directly near the 3'-end of the 23S rRNA, where it nucleates assembly of the 50S subunit. The protein is Large ribosomal subunit protein uL3 of Chlorobaculum parvum (strain DSM 263 / NCIMB 8327) (Chlorobium vibrioforme subsp. thiosulfatophilum).